The sequence spans 215 residues: Variable small protein 2 (215 aa).

Positions 1–18 are cleaved as a signal peptide; that stretch reads MRKRISAIIMTLFMVFMS. C19 carries the N-palmitoyl cysteine lipid modification. A lipid anchor (S-diacylglycerol cysteine) is attached at C19.

Belongs to the variable small protein (Vsp) family.

The protein localises to the cell outer membrane. The Vlp and Vsp proteins are antigenically distinct proteins, only one vlp or vsp gene is transcriptionally active at any one time. Switching between these genes is a mechanism of host immune response evasion. The protein is Variable small protein 2 of Borrelia hermsii.